Here is a 504-residue protein sequence, read N- to C-terminus: Maturase K (504 aa).

This sequence belongs to the intron maturase 2 family. MatK subfamily.

It is found in the plastid. The protein localises to the chloroplast. In terms of biological role, usually encoded in the trnK tRNA gene intron. Probably assists in splicing its own and other chloroplast group II introns. The protein is Maturase K of Olimarabidopsis pumila (Dwarf rocket).